We begin with the raw amino-acid sequence, 187 residues long: Large ribosomal subunit protein uL22 (187 aa).

It belongs to the universal ribosomal protein uL22 family.

This Theileria parva (East coast fever infection agent) protein is Large ribosomal subunit protein uL22 (RPL17).